Consider the following 122-residue polypeptide: Large ribosomal subunit protein bL12 (122 aa).

Belongs to the bacterial ribosomal protein bL12 family. Homodimer. Part of the ribosomal stalk of the 50S ribosomal subunit. Forms a multimeric L10(L12)X complex, where L10 forms an elongated spine to which 2 to 4 L12 dimers bind in a sequential fashion. Binds GTP-bound translation factors.

Forms part of the ribosomal stalk which helps the ribosome interact with GTP-bound translation factors. Is thus essential for accurate translation. This is Large ribosomal subunit protein bL12 from Glaesserella parasuis serovar 5 (strain SH0165) (Haemophilus parasuis).